Here is a 129-residue protein sequence, read N- to C-terminus: Small ribosomal subunit protein uS11 (129 aa).

Belongs to the universal ribosomal protein uS11 family. Part of the 30S ribosomal subunit. Interacts with proteins S7 and S18. Binds to IF-3.

Functionally, located on the platform of the 30S subunit, it bridges several disparate RNA helices of the 16S rRNA. Forms part of the Shine-Dalgarno cleft in the 70S ribosome. This is Small ribosomal subunit protein uS11 from Lactiplantibacillus plantarum (strain ATCC BAA-793 / NCIMB 8826 / WCFS1) (Lactobacillus plantarum).